A 261-amino-acid chain; its full sequence is DNA repair protein RecO (261 aa).

This sequence belongs to the RecO family.

Its function is as follows. Involved in DNA repair and RecF pathway recombination. In Gloeobacter violaceus (strain ATCC 29082 / PCC 7421), this protein is DNA repair protein RecO.